The sequence spans 347 residues: Ion-translocating oxidoreductase complex subunit D (347 aa).

Helical transmembrane passes span 15 to 35, 36 to 56, 84 to 104, and 114 to 134; these read IMFLVIVACLPGIFAKYYFFG, IGTLIQIFFSIFISLVLEIII, IPPLLPWWMTSIGLFFAIVVA, and NIFNPAMVGYAVLLISFPVYM. Threonine 182 carries the FMN phosphoryl threonine modification. Helical transmembrane passes span 217–237, 239–259, 261–281, 289–309, and 315–335; these read CINISFFLGGIFLLFTKIICW, IPISFLSSLGMLSIITYFYSK, LFMSPQVHFFSGGTMICAFFI, ACNNVGKIVFGIIIGFLVWII, and YPDAIAFSVLFANMTVPLVDY.

The protein belongs to the NqrB/RnfD family. In terms of assembly, the complex is composed of six subunits: RnfA, RnfB, RnfC, RnfD, RnfE and RnfG. The cofactor is FMN.

The protein resides in the cell inner membrane. Its function is as follows. Part of a membrane-bound complex that couples electron transfer with translocation of ions across the membrane. The polypeptide is Ion-translocating oxidoreductase complex subunit D (Buchnera aphidicola subsp. Acyrthosiphon pisum (strain 5A)).